The primary structure comprises 456 residues: Ribosomal protein uS12 methylthiotransferase RimO (456 aa).

The 116-residue stretch at 11–126 (PKVGFVSLGC…VMQAVHTHLP (116 aa)) folds into the MTTase N-terminal domain. [4Fe-4S] cluster-binding residues include C20, C56, C85, C157, C161, and C164. The Radical SAM core domain occupies 143–384 (LTPKHYAYLK…MEVAEEVSAR (242 aa)). In terms of domain architecture, TRAM spans 387-456 (QRKVGQTLRV…DGHDLWGEVA (70 aa)).

This sequence belongs to the methylthiotransferase family. RimO subfamily. Requires [4Fe-4S] cluster as cofactor.

It localises to the cytoplasm. It carries out the reaction L-aspartate(89)-[ribosomal protein uS12]-hydrogen + (sulfur carrier)-SH + AH2 + 2 S-adenosyl-L-methionine = 3-methylsulfanyl-L-aspartate(89)-[ribosomal protein uS12]-hydrogen + (sulfur carrier)-H + 5'-deoxyadenosine + L-methionine + A + S-adenosyl-L-homocysteine + 2 H(+). Its function is as follows. Catalyzes the methylthiolation of an aspartic acid residue of ribosomal protein uS12. This chain is Ribosomal protein uS12 methylthiotransferase RimO, found in Cupriavidus metallidurans (strain ATCC 43123 / DSM 2839 / NBRC 102507 / CH34) (Ralstonia metallidurans).